Reading from the N-terminus, the 490-residue chain is Glutamyl-tRNA(Gln) amidotransferase subunit A (490 aa).

Catalysis depends on charge relay system residues Lys79 and Ser154. Ser178 acts as the Acyl-ester intermediate in catalysis.

Belongs to the amidase family. GatA subfamily. In terms of assembly, heterotrimer of A, B and C subunits.

It carries out the reaction L-glutamyl-tRNA(Gln) + L-glutamine + ATP + H2O = L-glutaminyl-tRNA(Gln) + L-glutamate + ADP + phosphate + H(+). Allows the formation of correctly charged Gln-tRNA(Gln) through the transamidation of misacylated Glu-tRNA(Gln) in organisms which lack glutaminyl-tRNA synthetase. The reaction takes place in the presence of glutamine and ATP through an activated gamma-phospho-Glu-tRNA(Gln). The protein is Glutamyl-tRNA(Gln) amidotransferase subunit A of Roseiflexus castenholzii (strain DSM 13941 / HLO8).